Consider the following 288-residue polypeptide: Bifunctional protein FolD (288 aa).

Residues 163-165 (GRS), serine 188, and isoleucine 229 each bind NADP(+).

Belongs to the tetrahydrofolate dehydrogenase/cyclohydrolase family. As to quaternary structure, homodimer.

It carries out the reaction (6R)-5,10-methylene-5,6,7,8-tetrahydrofolate + NADP(+) = (6R)-5,10-methenyltetrahydrofolate + NADPH. The catalysed reaction is (6R)-5,10-methenyltetrahydrofolate + H2O = (6R)-10-formyltetrahydrofolate + H(+). It participates in one-carbon metabolism; tetrahydrofolate interconversion. Its function is as follows. Catalyzes the oxidation of 5,10-methylenetetrahydrofolate to 5,10-methenyltetrahydrofolate and then the hydrolysis of 5,10-methenyltetrahydrofolate to 10-formyltetrahydrofolate. This Campylobacter curvus (strain 525.92) protein is Bifunctional protein FolD.